The sequence spans 458 residues: Type III intermediate filament (458 aa).

Residues 1–100 (MEKGYKMNRS…KVNRTNEKAE (100 aa)) form a head region. One can recognise an IF rod domain in the interval 97 to 405 (EKAEMIELND…KLLEGEENRI (309 aa)). The tract at residues 406 to 458 (SMPLPSFGSMSLSDAMFEQQPFENRTSKKKIVIKTVETSGGDVISETTQKIED) is tail.

The protein belongs to the intermediate filament family.

The protein is Type III intermediate filament of Tetronarce californica (Pacific electric ray).